The chain runs to 193 residues: MGLTGTNTTLVAPQPKGILDPRTGKTVGSDDAFFNDLNGELSDKGFIVTSADALITWARTGSLMWMTFGLACCAVEMMHISMPRYDAERFGIAPRASPRQSDVMIVAGTLTNKMAPALRKVYDQMPEPRYVISMGSCANGGGYYHYSYSVVRGCDRVVPVDIYVPGCPPTAEALLYGILLLQKKIRRTGTIER.

Cysteine 72, cysteine 73, cysteine 137, and cysteine 167 together coordinate [4Fe-4S] cluster.

Belongs to the complex I 20 kDa subunit family. NDH-1 is composed of 14 different subunits. Subunits NuoB, C, D, E, F, and G constitute the peripheral sector of the complex. [4Fe-4S] cluster serves as cofactor.

The protein localises to the cell inner membrane. It catalyses the reaction a quinone + NADH + 5 H(+)(in) = a quinol + NAD(+) + 4 H(+)(out). Functionally, NDH-1 shuttles electrons from NADH, via FMN and iron-sulfur (Fe-S) centers, to quinones in the respiratory chain. Couples the redox reaction to proton translocation (for every two electrons transferred, four hydrogen ions are translocated across the cytoplasmic membrane), and thus conserves the redox energy in a proton gradient. This is NADH-quinone oxidoreductase subunit B from Brucella abortus (strain S19).